A 126-amino-acid polypeptide reads, in one-letter code: Arginine decarboxylase proenzyme (126 aa).

The active-site Schiff-base intermediate with substrate; via pyruvic acid is Ser-74. Pyruvic acid (Ser); by autocatalysis is present on Ser-74. Catalysis depends on His-79, which acts as the Proton acceptor; for processing activity. Cys-94 (proton donor; for catalytic activity) is an active-site residue.

It belongs to the prokaryotic AdoMetDC family. Type 1 subfamily. As to quaternary structure, heterooctamer of four alpha and four beta chains arranged as a tetramer of alpha/beta heterodimers. Requires pyruvate as cofactor. In terms of processing, is synthesized initially as an inactive proenzyme. Formation of the active enzyme involves a self-maturation process in which the active site pyruvoyl group is generated from an internal serine residue via an autocatalytic post-translational modification. Two non-identical subunits are generated from the proenzyme in this reaction, and the pyruvate is formed at the N-terminus of the alpha chain, which is derived from the carboxyl end of the proenzyme. The post-translation cleavage follows an unusual pathway, termed non-hydrolytic serinolysis, in which the side chain hydroxyl group of the serine supplies its oxygen atom to form the C-terminus of the beta chain, while the remainder of the serine residue undergoes an oxidative deamination to produce ammonia and the pyruvoyl group blocking the N-terminus of the alpha chain.

The catalysed reaction is L-arginine + H(+) = agmatine + CO2. Its pathway is amine and polyamine biosynthesis; agmatine biosynthesis; agmatine from L-arginine: step 1/1. Its function is as follows. Specifically catalyzes the decarboxylation of L-arginine to agmatine. Has no S-adenosylmethionine decarboxylase (AdoMetDC) activity. This chain is Arginine decarboxylase proenzyme, found in Pyrobaculum neutrophilum (strain DSM 2338 / JCM 9278 / NBRC 100436 / V24Sta) (Thermoproteus neutrophilus).